The sequence spans 156 residues: Aspartate 1-decarboxylase (156 aa).

Residue S26 is the Schiff-base intermediate with substrate; via pyruvic acid of the active site. S26 carries the post-translational modification Pyruvic acid (Ser). T58 serves as a coordination point for substrate. Y59 acts as the Proton donor in catalysis. 74-76 (GGA) is a binding site for substrate.

The protein belongs to the PanD family. In terms of assembly, heterooctamer of four alpha and four beta subunits. It depends on pyruvate as a cofactor. In terms of processing, is synthesized initially as an inactive proenzyme, which is activated by self-cleavage at a specific serine bond to produce a beta-subunit with a hydroxyl group at its C-terminus and an alpha-subunit with a pyruvoyl group at its N-terminus.

The protein resides in the cytoplasm. It catalyses the reaction L-aspartate + H(+) = beta-alanine + CO2. It functions in the pathway cofactor biosynthesis; (R)-pantothenate biosynthesis; beta-alanine from L-aspartate: step 1/1. Catalyzes the pyruvoyl-dependent decarboxylation of aspartate to produce beta-alanine. The chain is Aspartate 1-decarboxylase from Gloeothece citriformis (strain PCC 7424) (Cyanothece sp. (strain PCC 7424)).